A 220-amino-acid chain; its full sequence is MKLVVGLGNPGTQYAQTRHNVGWLVVNEVARRWGATWRKEKDAEVAEIRLGPAPGVKVLLVKPQTFMNASGKAVVPRLSFFKLDPGALLVVQDDLDSPFGLMKVRLGGRHGGQNGVRDIIRLLGTEAFARLKLGISRPPAGRDPADWVLSRWRDEEQSTLGDLVRLGADAVERWATAGLAEAQQAFNSTDLRPRPEPVPAPQPADVSGPQETGPAERPEV.

Tyr14 provides a ligand contact to tRNA. His19 functions as the Proton acceptor in the catalytic mechanism. TRNA-binding residues include Phe66, Asn68, and Asn114. The interval 184 to 220 is disordered; that stretch reads QAFNSTDLRPRPEPVPAPQPADVSGPQETGPAERPEV.

It belongs to the PTH family. In terms of assembly, monomer.

It localises to the cytoplasm. The catalysed reaction is an N-acyl-L-alpha-aminoacyl-tRNA + H2O = an N-acyl-L-amino acid + a tRNA + H(+). Functionally, hydrolyzes ribosome-free peptidyl-tRNAs (with 1 or more amino acids incorporated), which drop off the ribosome during protein synthesis, or as a result of ribosome stalling. In terms of biological role, catalyzes the release of premature peptidyl moieties from peptidyl-tRNA molecules trapped in stalled 50S ribosomal subunits, and thus maintains levels of free tRNAs and 50S ribosomes. In Deinococcus deserti (strain DSM 17065 / CIP 109153 / LMG 22923 / VCD115), this protein is Peptidyl-tRNA hydrolase.